The primary structure comprises 516 residues: 7-chloro-L-tryptophan 6-halogenase KtzR (516 aa).

Positions 6, 8, 9, 42, and 43 each coordinate FAD. Lysine 71 is an active-site residue. Valine 195 serves as a coordination point for FAD. Residues threonine 357 and glycine 358 each contribute to the chloride site. Isoleucine 359 is an FAD binding site.

It belongs to the flavin-dependent halogenase family. Bacterial tryptophan halogenase subfamily.

The enzyme catalyses 7-chloro-L-tryptophan + FADH2 + chloride + O2 = 6,7-dichloro-L-tryptophan + FAD + 2 H2O. Involved in the biosynthesis of kutznerides, actinomycete-derived antifungal and antimicrobial cyclic hexadepsipeptides. Together with KtzQ, catalyzes the regiospecific dichlorination of L-tryptophan (L-Trp) to produce 6,7-dichloro-L-tryptophan. KtzR catalyzes the chlorination of 7-chloro-L-tryptophan at C6 position to yield 6,7-dichloro-L-tryptophan. Can also use L-Trp as substrate and form 6-chloro-L-tryptophan, but has a 120-fold preference for 7-chloro-L-tryptophan over L-Trp. Cannot use piperazic acid or gamma,delta-dehydropiperazic acid. In Kutzneria sp. (strain 744), this protein is 7-chloro-L-tryptophan 6-halogenase KtzR.